Reading from the N-terminus, the 194-residue chain is HTH-type transcriptional regulator BetI (194 aa).

In terms of domain architecture, HTH tetR-type spans 8-68 (EIRRAQLIDA…ATMRHVLRDL (61 aa)). The segment at residues 31–50 (TLASVAQRANISTGIVSHYF) is a DNA-binding region (H-T-H motif).

Its pathway is amine and polyamine biosynthesis; betaine biosynthesis via choline pathway [regulation]. In terms of biological role, repressor involved in the biosynthesis of the osmoprotectant glycine betaine. It represses transcription of the choline transporter BetT and the genes of BetAB involved in the synthesis of glycine betaine. The polypeptide is HTH-type transcriptional regulator BetI (Burkholderia lata (strain ATCC 17760 / DSM 23089 / LMG 22485 / NCIMB 9086 / R18194 / 383)).